Reading from the N-terminus, the 331-residue chain is Serpentine receptor class alpha-1 (331 aa).

The next 7 membrane-spanning stretches (helical) occupy residues 22–42, 57–77, 104–124, 143–163, 189–209, 238–258, and 274–294; these read FAVF…VIAV, IILV…AIIS, YTEV…GILI, VGII…QIII, FLFI…AVMF, ICVV…GVLI, and LITW…ILIF.

The protein belongs to the nematode receptor-like protein sra family.

It localises to the membrane. This Caenorhabditis elegans protein is Serpentine receptor class alpha-1 (sra-1).